Here is a 332-residue protein sequence, read N- to C-terminus: MAKIYTDKDVSLDVIKEKRVAVLGYGSQGRAWALNLRDSGIKVSVGLEREGNSWKQAENDGFKPLRTEEAVRNSDIIIFLLPDMIQRTVYLERVKPYLKEGMDLVFAHGFNIHYRLIEPPSNVDVYMIAPKAPGPIVREYFAKGGGVPALVATYQDHSGKALQKALAVAKAIGATRAGVIETTFKEETETDLFGEQVDLVGGVMQLMRYAFQTLVEAGYQPEVAYFETINEMKLIVDLVYEKGFSGMLTAVSDTAKYGGMTVGKMVIDESVKERMKKALDNIRSGKFAEKWVEEYGKGANTIKEGMKEVDNSTEEKVGRSLRDIILRGKPKS.

The KARI N-terminal Rossmann domain occupies 2–182 (AKIYTDKDVS…GATRAGVIET (181 aa)). NADP(+) contacts are provided by residues 25–28 (YGSQ), S53, and 83–86 (DMIQ). H108 is an active-site residue. G134 lines the NADP(+) pocket. One can recognise a KARI C-terminal knotted domain in the interval 183-328 (TFKEETETDL…RSLRDIILRG (146 aa)). Mg(2+) is bound by residues D191, E195, E227, and E231. S252 provides a ligand contact to substrate.

The protein belongs to the ketol-acid reductoisomerase family. The cofactor is Mg(2+).

It catalyses the reaction (2R)-2,3-dihydroxy-3-methylbutanoate + NADP(+) = (2S)-2-acetolactate + NADPH + H(+). The enzyme catalyses (2R,3R)-2,3-dihydroxy-3-methylpentanoate + NADP(+) = (S)-2-ethyl-2-hydroxy-3-oxobutanoate + NADPH + H(+). The protein operates within amino-acid biosynthesis; L-isoleucine biosynthesis; L-isoleucine from 2-oxobutanoate: step 2/4. Its pathway is amino-acid biosynthesis; L-valine biosynthesis; L-valine from pyruvate: step 2/4. Involved in the biosynthesis of branched-chain amino acids (BCAA). Catalyzes an alkyl-migration followed by a ketol-acid reduction of (S)-2-acetolactate (S2AL) to yield (R)-2,3-dihydroxy-isovalerate. In the isomerase reaction, S2AL is rearranged via a Mg-dependent methyl migration to produce 3-hydroxy-3-methyl-2-ketobutyrate (HMKB). In the reductase reaction, this 2-ketoacid undergoes a metal-dependent reduction by NADPH to yield (R)-2,3-dihydroxy-isovalerate. This is Ketol-acid reductoisomerase (NADP(+)) from Sulfolobus acidocaldarius (strain ATCC 33909 / DSM 639 / JCM 8929 / NBRC 15157 / NCIMB 11770).